We begin with the raw amino-acid sequence, 128 residues long: Large ribosomal subunit protein bL12c (128 aa).

The protein belongs to the bacterial ribosomal protein bL12 family. In terms of assembly, homodimer. Part of the ribosomal stalk of the 50S ribosomal subunit. Forms a multimeric L10(L12)X complex, where L10 forms an elongated spine to which 2 to 4 L12 dimers bind in a sequential fashion. Binds GTP-bound translation factors.

It is found in the plastid. Its subcellular location is the chloroplast. Its function is as follows. Forms part of the ribosomal stalk which helps the ribosome interact with GTP-bound translation factors. Is thus essential for accurate translation. This Phaeodactylum tricornutum (strain CCAP 1055/1) protein is Large ribosomal subunit protein bL12c.